The primary structure comprises 440 residues: Serine hydroxymethyltransferase (440 aa).

(6S)-5,6,7,8-tetrahydrofolate-binding positions include Leu-119 and 123–125; that span reads GHL. N6-(pyridoxal phosphate)lysine is present on Lys-228. 370–372 contacts (6S)-5,6,7,8-tetrahydrofolate; that stretch reads SPF.

Belongs to the SHMT family. In terms of assembly, homodimer. Pyridoxal 5'-phosphate is required as a cofactor.

It is found in the cytoplasm. The enzyme catalyses (6R)-5,10-methylene-5,6,7,8-tetrahydrofolate + glycine + H2O = (6S)-5,6,7,8-tetrahydrofolate + L-serine. It functions in the pathway one-carbon metabolism; tetrahydrofolate interconversion. It participates in amino-acid biosynthesis; glycine biosynthesis; glycine from L-serine: step 1/1. Its function is as follows. Catalyzes the reversible interconversion of serine and glycine with tetrahydrofolate (THF) serving as the one-carbon carrier. This reaction serves as the major source of one-carbon groups required for the biosynthesis of purines, thymidylate, methionine, and other important biomolecules. Also exhibits THF-independent aldolase activity toward beta-hydroxyamino acids, producing glycine and aldehydes, via a retro-aldol mechanism. The protein is Serine hydroxymethyltransferase of Chlorobium luteolum (strain DSM 273 / BCRC 81028 / 2530) (Pelodictyon luteolum).